A 160-amino-acid polypeptide reads, in one-letter code: Prorelaxin (160 aa).

Intrachain disulfides connect C10/C147, C22/C160, and C146/C151. Positions 34–133 (QEKQRILGSG…KDFNLNIYSP (100 aa)) are cleaved as a propeptide — connecting peptide.

It belongs to the insulin family. Heterodimer of a B chain and an A chain linked by two disulfide bonds. In terms of tissue distribution, expressed in the endometrium during pregnancy and in mammary gland during lactation.

It localises to the secreted. In terms of biological role, relaxin is an ovarian hormone that acts with estrogen to produce dilatation of the birth canal in many mammals. It bears mature young, and allows separation of the pelvic bones. The chain is Prorelaxin (RLN) from Cavia porcellus (Guinea pig).